Here is a 124-residue protein sequence, read N- to C-terminus: NADH dehydrogenase [ubiquinone] iron-sulfur protein 6, mitochondrial (124 aa).

Residues 1 to 28 constitute a mitochondrion transit peptide; that stretch reads MAAAMTFCRLLNRCGEAARSLPLGARCF. The residue at position 98 (Lys98) is an N6-acetyllysine.

It belongs to the complex I NDUFS6 subunit family. In terms of assembly, mammalian complex I is composed of 45 different subunits. This is a component of the iron-sulfur (IP) fragment of the enzyme.

The protein resides in the mitochondrion inner membrane. Accessory subunit of the mitochondrial membrane respiratory chain NADH dehydrogenase (Complex I), that is believed not to be involved in catalysis. Complex I functions in the transfer of electrons from NADH to the respiratory chain. The immediate electron acceptor for the enzyme is believed to be ubiquinone. In Homo sapiens (Human), this protein is NADH dehydrogenase [ubiquinone] iron-sulfur protein 6, mitochondrial (NDUFS6).